Here is a 456-residue protein sequence, read N- to C-terminus: Alcohol acyltransferase 16 (456 aa).

Residues His167 and Asp382 each act as proton acceptor in the active site.

This sequence belongs to the plant acyltransferase family. Expressed in fruit.

It catalyses the reaction 3-(methylsulfanyl)propanoyl-CoA + butan-1-ol = butyl 3-(methylsulfanyl)propanoate + CoA. It carries out the reaction ethanol + benzoyl-CoA = ethyl benzoate + CoA. The enzyme catalyses butan-1-ol + benzoyl-CoA = butyl benzoate + CoA. The catalysed reaction is 2-(methylsulfanyl)acetyl-CoA + butan-1-ol = butyl 2-(methylsulfanyl)acetate + CoA. Its function is as follows. Involved in the biosynthesis of volatile esters which confer kiwifruit flavor. Alcohol acyl transferase that can use a wide range of alcohols as substrate to produce esters. Exhibits benzoyl-CoA:alcohol O-acyltransferase activity. The chain is Alcohol acyltransferase 16 from Actinidia chinensis var. chinensis (Chinese soft-hair kiwi).